The following is a 505-amino-acid chain: Structural protein 27 (505 aa).

3 hydrophobic regions span residues 20–40 (VSLICFLLVFSVTVPFVFSPV), 423–443 (MKGIGSDIQWLLFTVIIMSTI), and 470–490 (IGLGLLLSMVFFGIFIGLILV).

It localises to the virion. This is Structural protein 27 from His1 virus (isolate Australia/Victoria) (His1V).